A 233-amino-acid polypeptide reads, in one-letter code: Large ribosomal subunit protein uL1 (233 aa).

This sequence belongs to the universal ribosomal protein uL1 family. Part of the 50S ribosomal subunit.

Its function is as follows. Binds directly to 23S rRNA. The L1 stalk is quite mobile in the ribosome, and is involved in E site tRNA release. In terms of biological role, protein L1 is also a translational repressor protein, it controls the translation of the L11 operon by binding to its mRNA. The polypeptide is Large ribosomal subunit protein uL1 (Rhizobium etli (strain ATCC 51251 / DSM 11541 / JCM 21823 / NBRC 15573 / CFN 42)).